The chain runs to 205 residues: Mitotic spindle assembly checkpoint protein MAD2A (205 aa).

Alanine 2 bears the N-acetylalanine mark. A phosphoserine mark is found at serine 6, serine 130, serine 170, serine 178, serine 185, and serine 195. The HORMA domain occupies 14 to 197 (RGSAEIVAEF…TTIHKVNSMV (184 aa)). The segment at 195–205 (SMVAYKIPVND) is required for assuming the closed conformation and for interaction with CDC20.

This sequence belongs to the MAD2 family. In terms of assembly, monomer and homodimer. Heterodimerizes with MAD2L1 in order to form a tetrameric MAD1L1-MAD2L1 core complex. In the closed and open conformation, interacts with MAD1L1. Formation of a heterotetrameric core complex containing two molecules each of MAD1L1 and of MAD2L1 promotes binding of another molecule of MAD2L1 to each MAD2L1, resulting in a heterohexamer. Interacts with MAD2L1BP. Interacts with ADAM17/TACE. Interacts with CDC20. Dimeric MAD2L1 in the closed conformation interacts with CDC20. Monomeric MAD2L1 in the open conformation does not interact with CDC20. CDC20 competes with MAD1L1 for MAD2L1 binding. In the closed conformation, interacts with BUB1B. Interacts with TTK. Interacts with TPR. Binds to UBD (via ubiquitin-like 1 domain) during mitosis. Interacts with isoform 1 and isoform 2 of NEK2. Interacts with HSF1; this interaction occurs in mitosis. Interacts with isoform 3 of MAD1L1; this interaction leads to the cytoplasmic sequestration of MAD2L1. In terms of processing, phosphorylated on multiple serine residues. The level of phosphorylation varies during the cell cycle and is highest during mitosis. Phosphorylation abolishes interaction with MAD1L1 and reduces interaction with CDC20. Phosphorylated by NEK2.

The protein resides in the nucleus. It localises to the chromosome. The protein localises to the centromere. Its subcellular location is the kinetochore. It is found in the cytoplasm. The protein resides in the cytoskeleton. It localises to the spindle pole. Component of the spindle-assembly checkpoint that prevents the onset of anaphase until all chromosomes are properly aligned at the metaphase plate. In the closed conformation (C-MAD2) forms a heterotetrameric complex with MAD1L1 at unattached kinetochores during prometaphase, the complex recruits open conformation molecules of MAD2L1 (O-MAD2) and then promotes the conversion of O-MAD2 to C-MAD2. Required for the execution of the mitotic checkpoint which monitors the process of kinetochore-spindle attachment and inhibits the activity of the anaphase promoting complex by sequestering CDC20 until all chromosomes are aligned at the metaphase plate. The protein is Mitotic spindle assembly checkpoint protein MAD2A (MAD2L1) of Homo sapiens (Human).